Here is a 104-residue protein sequence, read N- to C-terminus: Protein enhancer of rudimentary (104 aa).

A Phosphothreonine; by CK2 modification is found at Thr-18. Ser-24 carries the post-translational modification Phosphoserine; by CK2.

It belongs to the E(R) family.

Acts as an enhancer of the rudimentary gene. Has a role in pyrimidine biosynthesis and the cell cycle. This Drosophila virilis (Fruit fly) protein is Protein enhancer of rudimentary (e(r)).